Reading from the N-terminus, the 575-residue chain is MATIGRRAYAEMYGPTVGDRVRLADTELVIEVEADYTLRAGGYGEEVKFGGGKVIRDGMGQSQRPNGPGPHDAVDCVVTNALILDHWGIVKADIGLRGQRIAAIGKAGNPDVQPGIDIVIGPGTEVIAGEGLIVTAGGIDCHIHFICPQQIEEALSSGVTTMLGGGTGPATGTFATTCTPGPENIANMLRAADAFPMNLGFFGKGNASRPEALRQQVEAGVIGLKLHEDWGTTPAAIDCCLSVADEGDVQVAIHSDTLNESGFVEDTIGATKGRTLCAFHTEGAGGGHAPDILRVVGEANFLPSSTNPTMPYTVNTLDEHVDMLMVCHHLDAAIAEDLAFAESRIRRETIAAEDILHDLGAISMFSSDSQAMGRVGEVVLRCWQTAHKMKVQRGKLPGDPERHDNGRAKRYVAKYTINPAIAHGVSHEVGSIEVGKWADLVFWRPAFFGVKPSLVMKGGFIASALMGDANASIPTPQPVHYRPMFGAFGGALTRGSLSFVSQAALASEVGSVYGLRKPLSAVKQCRTVKKGDMVHNAYLPRMEVDAQTYQVRADGQLLTCEPATALPMTQRYFLF.

The Urease domain maps to 137–575; that stretch reads GGIDCHIHFI…LPMTQRYFLF (439 aa). The Ni(2+) site is built by His-142, His-144, and Lys-225. Lys-225 bears the N6-carboxylysine mark. His-227 lines the substrate pocket. His-254 and His-280 together coordinate Ni(2+). His-328 acts as the Proton donor in catalysis. Residue Asp-368 coordinates Ni(2+).

This sequence belongs to the metallo-dependent hydrolases superfamily. Urease alpha subunit family. As to quaternary structure, heterotrimer of UreA (gamma), UreB (beta) and UreC (alpha) subunits. Three heterotrimers associate to form the active enzyme. Requires Ni cation as cofactor. In terms of processing, carboxylation allows a single lysine to coordinate two nickel ions.

It is found in the cytoplasm. The catalysed reaction is urea + 2 H2O + H(+) = hydrogencarbonate + 2 NH4(+). It participates in nitrogen metabolism; urea degradation; CO(2) and NH(3) from urea (urease route): step 1/1. The protein is Urease subunit alpha of Methylibium petroleiphilum (strain ATCC BAA-1232 / LMG 22953 / PM1).